Here is a 494-residue protein sequence, read N- to C-terminus: Transmembrane and coiled-coil domain-containing protein 6 (494 aa).

Residues 15–39 (GVEELRRRRREREAALRKARREQQL) adopt a coiled-coil conformation. 2 helical membrane passes run 338 to 358 (LVAA…ALLP) and 386 to 406 (PLLQ…TVLC).

The protein resides in the membrane. In Mus musculus (Mouse), this protein is Transmembrane and coiled-coil domain-containing protein 6 (Tmco6).